The chain runs to 431 residues: Histidinol dehydrogenase (431 aa).

The NAD(+) site is built by Tyr-129, Gln-191, and Asn-214. Residues Ser-237, Gln-259, and His-262 each contribute to the substrate site. Gln-259 and His-262 together coordinate Zn(2+). Residues Glu-327 and His-328 each act as proton acceptor in the active site. Substrate-binding residues include His-328, Asp-361, Glu-415, and His-420. Asp-361 lines the Zn(2+) pocket. Zn(2+) is bound at residue His-420.

The protein belongs to the histidinol dehydrogenase family. It depends on Zn(2+) as a cofactor.

It carries out the reaction L-histidinol + 2 NAD(+) + H2O = L-histidine + 2 NADH + 3 H(+). It participates in amino-acid biosynthesis; L-histidine biosynthesis; L-histidine from 5-phospho-alpha-D-ribose 1-diphosphate: step 9/9. In terms of biological role, catalyzes the sequential NAD-dependent oxidations of L-histidinol to L-histidinaldehyde and then to L-histidine. The sequence is that of Histidinol dehydrogenase (hisD) from Lactococcus lactis subsp. lactis (strain IL1403) (Streptococcus lactis).